Reading from the N-terminus, the 276-residue chain is Large ribosomal subunit protein uL2 (276 aa).

The interval 219 to 276 (TVRGSVMNPNDHPHGGGEGRAPIGRKSPMSPWGKPTLGYKTRQRNKPSDKYIVRKRKK) is disordered.

It belongs to the universal ribosomal protein uL2 family. Part of the 50S ribosomal subunit. Forms a bridge to the 30S subunit in the 70S ribosome.

One of the primary rRNA binding proteins. Required for association of the 30S and 50S subunits to form the 70S ribosome, for tRNA binding and peptide bond formation. It has been suggested to have peptidyltransferase activity; this is somewhat controversial. Makes several contacts with the 16S rRNA in the 70S ribosome. This is Large ribosomal subunit protein uL2 from Oceanobacillus iheyensis (strain DSM 14371 / CIP 107618 / JCM 11309 / KCTC 3954 / HTE831).